The sequence spans 141 residues: Hemoglobin subunit alpha-A (141 aa).

The 141-residue stretch at 1-141 folds into the Globin domain; sequence VLSAADKTNV…VGTVLTAKYR (141 aa). H58 lines the O2 pocket. H87 contributes to the heme b binding site.

The protein belongs to the globin family. Heterotetramer of two alpha chains and two beta chains. In terms of tissue distribution, red blood cells.

Its function is as follows. Involved in oxygen transport from the lung to the various peripheral tissues. The protein is Hemoglobin subunit alpha-A (HBAA) of Branta canadensis (Canada goose).